Consider the following 275-residue polypeptide: 2,3,4,5-tetrahydropyridine-2,6-dicarboxylate N-succinyltransferase (275 aa).

Arg106 and Asp143 together coordinate substrate.

Belongs to the transferase hexapeptide repeat family. As to quaternary structure, homotrimer.

It is found in the cytoplasm. The enzyme catalyses (S)-2,3,4,5-tetrahydrodipicolinate + succinyl-CoA + H2O = (S)-2-succinylamino-6-oxoheptanedioate + CoA. Its pathway is amino-acid biosynthesis; L-lysine biosynthesis via DAP pathway; LL-2,6-diaminopimelate from (S)-tetrahydrodipicolinate (succinylase route): step 1/3. This chain is 2,3,4,5-tetrahydropyridine-2,6-dicarboxylate N-succinyltransferase, found in Rickettsia bellii (strain RML369-C).